The sequence spans 146 residues: Kappa-casein (146 aa).

Thr-107 and Thr-112 each carry an O-linked (GalNAc...) threonine glycan. A Phosphoserine; alternate modification is found at Ser-125. O-linked (GalNAc...) serine; alternate glycosylation occurs at Ser-125. A glycan (O-linked (GalNAc...) threonine) is linked at Thr-142. Ser-143 bears the Phosphoserine mark.

This sequence belongs to the kappa-casein family. Mammary gland specific. Secreted in milk.

Its subcellular location is the secreted. Functionally, kappa-casein stabilizes micelle formation, preventing casein precipitation in milk. The chain is Kappa-casein (CSN3) from Tapirus indicus (Asiatic tapir).